The sequence spans 192 residues: Glycerol-3-phosphate acyltransferase (192 aa).

The next 5 membrane-spanning stretches (helical) occupy residues 5–25 (VVLI…ITRI), 50–70 (FLAA…VYIA), 78–98 (DFYI…PIWL), 112–132 (ILIA…IIVF), and 153–173 (SFFF…LVFL).

This sequence belongs to the PlsY family. As to quaternary structure, probably interacts with PlsX.

The protein resides in the cell membrane. The catalysed reaction is an acyl phosphate + sn-glycerol 3-phosphate = a 1-acyl-sn-glycero-3-phosphate + phosphate. It participates in lipid metabolism; phospholipid metabolism. Functionally, catalyzes the transfer of an acyl group from acyl-phosphate (acyl-PO(4)) to glycerol-3-phosphate (G3P) to form lysophosphatidic acid (LPA). This enzyme utilizes acyl-phosphate as fatty acyl donor, but not acyl-CoA or acyl-ACP. This is Glycerol-3-phosphate acyltransferase from Wolbachia pipientis wMel.